The sequence spans 176 residues: Co-chaperone protein HscB homolog (176 aa).

In terms of domain architecture, J spans 7–79 (THFSLFGLPE…LKRATYLLHL (73 aa)).

This sequence belongs to the HscB family. As to quaternary structure, interacts with HscA and stimulates its ATPase activity.

Its function is as follows. Co-chaperone involved in the maturation of iron-sulfur cluster-containing proteins. Seems to help targeting proteins to be folded toward HscA. In Ralstonia nicotianae (strain ATCC BAA-1114 / GMI1000) (Ralstonia solanacearum), this protein is Co-chaperone protein HscB homolog.